The chain runs to 193 residues: Large ribosomal subunit protein uL18 (193 aa).

It belongs to the universal ribosomal protein uL18 family. In terms of assembly, part of the 50S ribosomal subunit. Contacts the 5S and 23S rRNAs.

This is one of the proteins that bind and probably mediate the attachment of the 5S RNA into the large ribosomal subunit, where it forms part of the central protuberance. The sequence is that of Large ribosomal subunit protein uL18 from Methanococcus maripaludis (strain C6 / ATCC BAA-1332).